The sequence spans 316 residues: HPr kinase/phosphorylase (316 aa).

Catalysis depends on residues His-143 and Lys-164. An ATP-binding site is contributed by 158 to 165 (GEAGSGKS). Ser-165 provides a ligand contact to Mg(2+). The active-site Proton acceptor; for phosphorylation activity. Proton donor; for dephosphorylation activity is Asp-182. An important for the catalytic mechanism of both phosphorylation and dephosphorylation region spans residues 206-215 (LEVRGLGVLN). Mg(2+) is bound at residue Glu-207. Residue Arg-251 is part of the active site. Residues 272–277 (PVMPGR) are important for the catalytic mechanism of dephosphorylation.

It belongs to the HPrK/P family. In terms of assembly, homohexamer. Mg(2+) is required as a cofactor.

It catalyses the reaction [HPr protein]-L-serine + ATP = [HPr protein]-O-phospho-L-serine + ADP + H(+). The catalysed reaction is [HPr protein]-O-phospho-L-serine + phosphate + H(+) = [HPr protein]-L-serine + diphosphate. In terms of biological role, catalyzes the ATP- as well as the pyrophosphate-dependent phosphorylation of a specific serine residue in HPr, a phosphocarrier protein of the phosphoenolpyruvate-dependent sugar phosphotransferase system (PTS). HprK/P also catalyzes the pyrophosphate-producing, inorganic phosphate-dependent dephosphorylation (phosphorolysis) of seryl-phosphorylated HPr (P-Ser-HPr). The chain is HPr kinase/phosphorylase from Xanthomonas campestris pv. campestris (strain 8004).